Here is a 954-residue protein sequence, read N- to C-terminus: Valine--tRNA ligase (954 aa).

The 'HIGH' region motif lies at 48-58; sequence PNVTGSLHMGH. The 'KMSKS' region motif lies at 560-564; the sequence is KMSKS. Lys-563 lines the ATP pocket. A coiled-coil region spans residues 883 to 953; it reads AGFINKEAEL…IQEQYKAIEA (71 aa).

It belongs to the class-I aminoacyl-tRNA synthetase family. ValS type 1 subfamily. Monomer.

The protein localises to the cytoplasm. It carries out the reaction tRNA(Val) + L-valine + ATP = L-valyl-tRNA(Val) + AMP + diphosphate. Catalyzes the attachment of valine to tRNA(Val). As ValRS can inadvertently accommodate and process structurally similar amino acids such as threonine, to avoid such errors, it has a 'posttransfer' editing activity that hydrolyzes mischarged Thr-tRNA(Val) in a tRNA-dependent manner. This chain is Valine--tRNA ligase, found in Haemophilus influenzae (strain 86-028NP).